The chain runs to 336 residues: Corrinoid adenosyltransferase PduO (336 aa).

The pduON stretch occupies residues 1–185 (MAIYTRTGDA…IIREVSKRYL (185 aa)). Positions 194-336 (KETTPVALSF…IAAINVGTHQ (143 aa)) are pduOC. Histidine 207 lines the heme pocket. 2 residues coordinate Mg(2+): glutamate 215 and glutamine 218.

This sequence belongs to the Cob(I)alamin adenosyltransferase family. PduO subfamily. As to quaternary structure, the C-terminal domain (PduOC) forms stable octamers and also crystallizes as an octamer. Forms a complex with PduS. It depends on heme b as a cofactor. Mg(2+) is required as a cofactor.

It is found in the bacterial microcompartment. It carries out the reaction cob(I)alamin-[corrinoid adenosyltransferase] + ATP = apo-[corrinoid adenosyltransferase] + adenosylcob(III)alamin + triphosphate. It participates in polyol metabolism; 1,2-propanediol degradation. Its pathway is cofactor biosynthesis; adenosylcobalamin biosynthesis. Inhibited by ADP but not significantly by other nucleotides, inhibited by diphosphate and less well by triphosphate. In terms of biological role, converts cob(I)alamin to adenosylcobalamin (adenosylcob(III)alamin), the cofactor for propanediol dehydratase. Found in the bacterial microcompartment (BMC) dedicated to 1,2-propanediol (1,2-PD) degradation. For adenosylcobalamin synthesis dATP can replace ATP, but no other nucleotides will substitute. PduS and PduO allow regeneration of the adenosylcobalamin cofactor within the BMC. The 1,2-PD-specific bacterial microcompartment (BMC) concentrates low levels of 1,2-PD catabolic enzymes, concentrates volatile reaction intermediates thus enhancing pathway flux and keeps the level of toxic, mutagenic propionaldehyde low. The polypeptide is Corrinoid adenosyltransferase PduO (Salmonella typhimurium (strain LT2 / SGSC1412 / ATCC 700720)).